A 397-amino-acid chain; its full sequence is Phosphoglycerate kinase (397 aa).

Substrate contacts are provided by residues 22 to 24, Arg37, 60 to 63, Arg119, and Arg152; these read DLN and HFGR. Residues Lys202, Glu324, and 354 to 357 each bind ATP; that span reads GGDT.

The protein belongs to the phosphoglycerate kinase family. Monomer.

The protein localises to the cytoplasm. The enzyme catalyses (2R)-3-phosphoglycerate + ATP = (2R)-3-phospho-glyceroyl phosphate + ADP. It participates in carbohydrate degradation; glycolysis; pyruvate from D-glyceraldehyde 3-phosphate: step 2/5. The sequence is that of Phosphoglycerate kinase from Rhizorhabdus wittichii (strain DSM 6014 / CCUG 31198 / JCM 15750 / NBRC 105917 / EY 4224 / RW1) (Sphingomonas wittichii).